The sequence spans 2123 residues: Bromodomain adjacent to zinc finger domain protein 2B (2123 aa).

Disordered regions lie at residues 1-129, 144-306, 357-402, 473-534, 546-691, 756-793, and 937-960; these read MESG…VNGT, TPAS…LSQQ, PSPD…EMGK, NENV…HPHP, RGTD…RRVA, RAMD…GSAE, and ARKK…LNKE. A compositionally biased stretch (low complexity) spans 7–46; sequence LPSSPASSTTPTSSSAPSVASAVSKSSLSTGAASLSSTAS. Over residues 83-95 the composition is skewed to pro residues; the sequence is FFPPLLGIPPLFA. Positions 100–116 are enriched in polar residues; sequence NHDSSFHSRTSGKSSRN. Composition is skewed to low complexity over residues 147–157 and 193–216; these read SSSMGQNQSTS and ESSS…ISSS. Residues 217–243 are compositionally biased toward acidic residues; it reads DSDDLEEEEEEDQSVEESEDDDSDSET. Positions 259 to 277 are enriched in basic and acidic residues; sequence SDPKTDGQKATEKAQERRT. Composition is skewed to low complexity over residues 291 to 306 and 366 to 379; these read PPFQ…LSQQ and NKNT…LTSE. Positions 473–502 are enriched in polar residues; the sequence is NENVSSSTPFSSPVNLSTSGRRAPGSQTPA. A compositionally biased stretch (basic and acidic residues) spans 546–559; the sequence is RGTDSDVPSSKDSE. Acidic residues predominate over residues 560 to 587; the sequence is DSNEDEEEDDEEEDEEDDEDDESDDSQS. A compositionally biased stretch (low complexity) spans 588-597; that stretch reads ESDSNSQSDS. The span at 598–615 shows a compositional bias: acidic residues; it reads EGSEDDEEKDQEESDSDT. Low complexity-rich tracts occupy residues 628–637 and 671–683; these read SSSAKSPPSS and TSSS…PHSG. An MBD domain is found at 690 to 765; it reads VADDQELRIP…RAMDGRRGRP (76 aa). Positions 756–778 are enriched in basic and acidic residues; it reads RAMDGRRGRPPNPDRPRAREESR. Residues 1004–1069 form the DDT domain; it reads GTTFSDCLMV…LSAAVCDPGL (66 aa). Disordered stretches follow at residues 1183–1260, 1396–1444, 1499–1526, and 1588–1614; these read RDAS…QTAS, PPES…KTDA, TLVT…SSVQ, and FLTS…AQPV. The span at 1214–1238 shows a compositional bias: acidic residues; sequence SDYDDDDDDDSDDQADEDEEDEEDK. Over residues 1239-1248 the composition is skewed to basic and acidic residues; the sequence is DDKKGKKTDI. A coiled-coil region spans residues 1254 to 1281; that stretch reads EGDQTASVEELEKQIEKLSKQQSQYRRK. Composition is skewed to polar residues over residues 1408-1422 and 1430-1444; these read NVST…QNSG and PSAT…KTDA. Residues 1505-1515 show a composition bias toward pro residues; that stretch reads SQPPSKSPSPA. A compositionally biased stretch (low complexity) spans 1588–1600; sequence FLTSSVASSKSDS. Residues 1886 to 1936 form a PHD-type zinc finger; sequence KVYCQICRKGDNEELLLLCDGCDKGCHTYCHRPKITTIPDGDWFCPACISK. The tract at residues 1949-2013 is disordered; that stretch reads VKGKKTNDSK…AESTTSIKKP (65 aa). A compositionally biased stretch (basic and acidic residues) spans 1984–1995; sequence GSKELKKRKMEE. Positions 1996 to 2010 are enriched in polar residues; sequence TTSLNLSKAESTTSI. The region spanning 2015-2119 is the Bromo domain; it reads KDESRDLALC…KYFEKKWTDT (105 aa).

This sequence belongs to the WAL family. In terms of assembly, component of the BRF-1 ISWI chromatin remodeling complex, at least composed of SMARCA1 and BAZ2B, which regulates the spacing of histone octamers on the DNA template to facilitate access to DNA. Within the BRF-1 ISWI chromatin remodeling complex interacts with SMARCA1; the interaction is direct. Component of the BRF-5 ISWI chromatin remodeling complex, at least composed of SMARCA5/SNF2H and BAZ2B, which regulates the spacing of histone octamers on the DNA template to facilitate access to DNA. Within the BRF-5 ISWI chromatin remodeling complex interacts with SMARCA5/SNF2H; the interaction is direct. Interacts with acetylated lysine residues on histone H1.4, H2A, H2B, H3 and H4 (in vitro). Interacts with EHMT1.

It is found in the nucleus. Its function is as follows. Regulatory subunit of the ATP-dependent BRF-1 and BRF-5 ISWI chromatin remodeling complexes, which form ordered nucleosome arrays on chromatin and facilitate access to DNA during DNA-templated processes such as DNA replication, transcription, and repair. Both complexes regulate the spacing of nucleosomes along the chromatin and have the ability to slide mononucleosomes to the center of a DNA template. The BRF-1 ISWI chromatin remodeling complex has a lower ATP hydrolysis rate than the BRF-5 ISWI chromatin remodeling complex. Chromatin reader protein, involved in positively modulating the rate of age-related behavioral deterioration. Represses the expression of mitochondrial function-related genes, perhaps by occupying their promoter regions, working in concert with histone methyltransferase EHMT1. This is Bromodomain adjacent to zinc finger domain protein 2B from Mus musculus (Mouse).